We begin with the raw amino-acid sequence, 266 residues long: Gasdermin bGSDM (266 aa).

Residue cysteine 6 is the site of S-palmitoyl cysteine attachment. Transmembrane regions (beta stranded) follow at residues 70 to 86 (ISHSETSRKSLQAAGNF), 99 to 117 (APKLDLSFARGAVVTFSFS), 163 to 180 (AIDMTLATDGSAKVDVQA), and 189 to 205 (LGGKAECEVKSSTTISF). Residues 245–266 (GAAEPYLLRRGQVLIVEDMQAT) are C-terminal region.

Belongs to the bacterial gasdermin family. As to quaternary structure, monomer. In terms of assembly, forms large, homooligomeric ring-shaped pores when inserted in membranes. Cleavage by the adjacently encoded protease (probably ISF6_0256) predicted to occur between Glu-244 and Gly-245 relieves autoinhibition, releasing the N-terminus which initiates loss of cell integrity. Post-translationally, palmitoylation helps stabilize the inactive state; may self palmitoylate. Palmitoylation plays a significant role in pore formation.

The protein localises to the cytoplasm. It localises to the cell inner membrane. Its activity is regulated as follows. The full-length protein before cleavage is inactive: intramolecular interactions between the N-terminal domain and the C-terminal region as well as the lipid modification, mediate autoinhibition. The pyroptosis-like-inducing activity is carried by the released N-terminal domain (Gasdermin bGSDM, N-terminus). Precursor of a pore-forming protein involved in defense against bacteriophages. Cleavage of this precursor by its dedicated, neighboring protease (probably ISF6_0256) releases the active moiety (gasdermin bGSDM, N-terminus) which inserts into membranes, forming pores and triggering cell death. Functionally, pore-forming protein that causes membrane permeabilization via a pyroptosis-like activity. Makes ring-like pores with an interior pore diameter of 300-400 Angstroms, when integrated in liposomes. This Piscinibacter sakaiensis (Ideonella sakaiensis) protein is Gasdermin bGSDM.